Consider the following 536-residue polypeptide: GMP synthase [glutamine-hydrolyzing] (536 aa).

The Glutamine amidotransferase type-1 domain maps to 4–206 (KILILDFGSQ…VLDICGARAD (203 aa)). Cysteine 85 (nucleophile) is an active-site residue. Active-site residues include histidine 180 and glutamate 182. A GMPS ATP-PPase domain is found at 207-404 (WIMGDYISEA…LGLPYHMVYR (198 aa)). Position 234–240 (234–240 (SGGVDSS)) interacts with ATP.

Homodimer.

It catalyses the reaction XMP + L-glutamine + ATP + H2O = GMP + L-glutamate + AMP + diphosphate + 2 H(+). It participates in purine metabolism; GMP biosynthesis; GMP from XMP (L-Gln route): step 1/1. Its function is as follows. Catalyzes the synthesis of GMP from XMP. The polypeptide is GMP synthase [glutamine-hydrolyzing] (Albidiferax ferrireducens (strain ATCC BAA-621 / DSM 15236 / T118) (Rhodoferax ferrireducens)).